Here is a 417-residue protein sequence, read N- to C-terminus: Probable medium-chain specific acyl-CoA dehydrogenase 10, mitochondrial (417 aa).

A mitochondrion-targeting transit peptide spans 1-15 (MLSRIATSSLGLSRS). FAD contacts are provided by residues 148 to 157 (YCVTEPGAGS) and 181 to 183 (WIT). Serine 157 serves as a coordination point for substrate. Position 268 to 271 (268 to 271 (DMTR)) interacts with substrate. FAD is bound by residues 306–307 (HQ) and 364–368 (QIFGG). Glutamate 391 serves as the catalytic Proton acceptor. A substrate-binding site is contributed by glycine 392. 393–395 (TSQ) contacts FAD.

The protein belongs to the acyl-CoA dehydrogenase family. Homotetramer. FAD is required as a cofactor. Expressed in the epidermis and intestine.

The protein resides in the mitochondrion matrix. The catalysed reaction is a medium-chain 2,3-saturated fatty acyl-CoA + oxidized [electron-transfer flavoprotein] + H(+) = a medium-chain (2E)-enoyl-CoA + reduced [electron-transfer flavoprotein]. Its pathway is lipid metabolism; mitochondrial fatty acid beta-oxidation. Functionally, this enzyme is specific for acyl chain lengths of 4 to 16. This is Probable medium-chain specific acyl-CoA dehydrogenase 10, mitochondrial (acdh-10) from Caenorhabditis elegans.